Consider the following 468-residue polypeptide: Argininosuccinate lyase (468 aa).

It belongs to the lyase 1 family. Argininosuccinate lyase subfamily.

It localises to the cytoplasm. The catalysed reaction is 2-(N(omega)-L-arginino)succinate = fumarate + L-arginine. It participates in amino-acid biosynthesis; L-arginine biosynthesis; L-arginine from L-ornithine and carbamoyl phosphate: step 3/3. The protein is Argininosuccinate lyase of Zymomonas mobilis subsp. mobilis (strain ATCC 31821 / ZM4 / CP4).